The sequence spans 184 residues: Tumor necrosis factor alpha-induced protein 8-like protein 2 (184 aa).

Ser-3 is modified (phosphoserine).

Belongs to the TNFAIP8 family. TNFAIP8L2 subfamily. In terms of assembly, may interact with CASP8; however, such result is unclear since could not reproduce the interaction with CASP8. Interacts with RAC1. In terms of processing, phosphorylated by TAK1/MAP3K7; this phosphorylation triggers association with BTRC and subsequent ubiquitination and degradation. Post-translationally, ubiquitinated in a BTRC-depdent manner; leading to degradation mediated through the proteasome pathway.

It is found in the cytoplasm. It localises to the nucleus. The protein resides in the lysosome. Acts as a negative regulator of innate and adaptive immunity by maintaining immune homeostasis. Plays a regulatory role in the Toll-like signaling pathway by determining the strength of LPS-induced signaling and gene expression. Inhibits TCR-mediated T-cell activation and negatively regulate T-cell function to prevent hyperresponsiveness. Also inhibits autolysosome formation via negatively modulating MTOR activation by interacting with RAC1 and promoting the disassociation of the RAC1-MTOR complex. Plays an essential role in NK-cell biology by acting as a checkpoint and displaying an expression pattern correlating with NK-cell maturation process and by negatively regulating NK-cell maturation and antitumor immunity. Mechanistically, suppresses IL-15-triggered mTOR activity in NK-cells. The chain is Tumor necrosis factor alpha-induced protein 8-like protein 2 (Tnfaip8l2) from Rattus norvegicus (Rat).